Here is a 248-residue protein sequence, read N- to C-terminus: DNA repair protein RecO (248 aa).

Belongs to the RecO family.

Involved in DNA repair and RecF pathway recombination. This chain is DNA repair protein RecO, found in Streptomyces avermitilis (strain ATCC 31267 / DSM 46492 / JCM 5070 / NBRC 14893 / NCIMB 12804 / NRRL 8165 / MA-4680).